Reading from the N-terminus, the 341-residue chain is Annexin A1 isoform p35 (341 aa).

Annexin repeat units lie at residues Phe37–Lys108, Thr109–Lys180, Glu192–Lys263, and Ser267–Gly338.

The protein belongs to the annexin family. In contrast to mammalian homologs, does not contain a tyrosine phosphorylation site in the N-terminal part.

The protein localises to the nucleus. It localises to the cytoplasm. Its subcellular location is the cell projection. The protein resides in the cilium. It is found in the basolateral cell membrane. Functionally, calcium/phospholipid-binding protein which promotes membrane fusion and is involved in exocytosis. This protein regulates phospholipase A2 activity. It seems to bind from two to four calcium ions with high affinity. The chain is Annexin A1 isoform p35 (CP35) from Columba livia (Rock dove).